We begin with the raw amino-acid sequence, 378 residues long: MTENKSFKESHPLDDFISDKELSNTTIQKEKLTIEQQKQVDTISKQINPLDNEGLLAFGSDLQKQMSQFSHQMLDEVQSKDVGPIGDTLSDLMSKLKSVNPNELNTDKPSMLKRIFSRAKSSINEIFSRMQSVSAQVDRITIQLQKHQTHLTRDIELLDTLYDKNKQYFDDLSLHIIAAQQKKLQLENEKLPQLQQQAQQSTNQMDIQQVADMQQFIDRLDKRIYDLQLSRQIALQTAPQIRMIQNVNQALAEKIQSSILTSIPLWKNQMAIALTLMRQRNAVAAQRAVTDTTNDLLTANAEMLKQNAIETATENERGIVDLDTLKRTQRNIIETIEETLIIQQHGREERQLAEKELQQLEQDLKSHLVNIKGPNKQS.

This sequence belongs to the TelA family.

The sequence is that of TelA-like protein SAUSA300_1299 from Staphylococcus aureus (strain USA300).